Reading from the N-terminus, the 751-residue chain is Pyridoxal-dependent decarboxylase domain-containing protein 1 (751 aa).

Residues 659 to 751 are disordered; it reads QMRKEDSPDS…QEAESVETIR (93 aa). The segment covering 690-702 has biased composition (polar residues); sequence DSISETSSVSQLE. Positions 720 to 729 are enriched in basic and acidic residues; the sequence is PQERPAHILE. Over residues 742–751 the composition is skewed to acidic residues; that stretch reads QEAESVETIR.

Belongs to the group II decarboxylase family. Requires pyridoxal 5'-phosphate as cofactor.

The chain is Pyridoxal-dependent decarboxylase domain-containing protein 1 (pdxdc1) from Danio rerio (Zebrafish).